The following is a 291-amino-acid chain: Tumor necrosis factor ligand superfamily member 10 (291 aa).

Over 1–17 (MPSSGALKDLSFSQHFR) the chain is Cytoplasmic. Residues 18–38 (MMVICIVLLQVLLQAVSVAVT) traverse the membrane as a helical; Signal-anchor for type II membrane protein segment. Residues 39–291 (YMYFTNEMKQ…ASFFGAFLIN (253 aa)) lie on the Extracellular side of the membrane. A glycan (N-linked (GlcNAc...) asparagine) is linked at Asn-52. Positions 126 to 290 (VAAHITGITR…EASFFGAFLI (165 aa)) constitute a THD domain. Cys-240 lines the Zn(2+) pocket.

It belongs to the tumor necrosis factor family. In terms of assembly, homotrimer. One TNFSF10 homotrimer interacts with three TNFSF10A mononers. One TNFSF10 homotrimer interacts with three TNFSF10B mononers. Post-translationally, tyrosine phosphorylated by PKDCC/VLK. As to expression, widespread.

Its subcellular location is the cell membrane. The protein resides in the secreted. Functionally, cytokine that binds to TNFRSF10A/TRAILR1, TNFRSF10B/TRAILR2, TNFRSF10C/TRAILR3, TNFRSF10D/TRAILR4 and possibly also to TNFRSF11B/OPG. Induces apoptosis. Its activity may be modulated by binding to the decoy receptors TNFRSF10C/TRAILR3, TNFRSF10D/TRAILR4 and TNFRSF11B/OPG that cannot induce apoptosis. The protein is Tumor necrosis factor ligand superfamily member 10 (Tnfsf10) of Mus musculus (Mouse).